The following is a 285-amino-acid chain: uncharacterized protein (285 aa).

Disordered stretches follow at residues 115 to 139 (AAGK…QERN) and 152 to 183 (EHDV…NRGV). Composition is skewed to basic and acidic residues over residues 128–138 (KEADVQTKQER) and 152–170 (EHDV…DLKT).

This is an uncharacterized protein from Escherichia coli (strain K12).